A 185-amino-acid polypeptide reads, in one-letter code: Ribosome-recycling factor (185 aa).

This sequence belongs to the RRF family.

Its subcellular location is the cytoplasm. Functionally, responsible for the release of ribosomes from messenger RNA at the termination of protein biosynthesis. May increase the efficiency of translation by recycling ribosomes from one round of translation to another. The protein is Ribosome-recycling factor of Thermosipho africanus (strain TCF52B).